A 197-amino-acid chain; its full sequence is Putative mediator of RNA polymerase II transcription subunit 9 (197 aa).

The stretch at 83 to 117 forms a coiled coil; the sequence is GINRSLENQEELLKTYKQTLKKKVELLEKLKKLEI. The span at 126–144 shows a compositional bias: polar residues; the sequence is STSSQSPQIQSKLELQTEL. A disordered region spans residues 126 to 197; it reads STSSQSPQIQ…KETTEDIMKE (72 aa). Residues 145-182 show a composition bias toward low complexity; the sequence is SQTEPSQTEPSQTEPSQTEPSQTESSQIESSQIESSQT. Over residues 183-197 the composition is skewed to basic and acidic residues; it reads ETEKSKETTEDIMKE.

Belongs to the Mediator complex subunit 9 family. Component of the Mediator complex.

The protein resides in the nucleus. Functionally, component of the Mediator complex, a coactivator involved in the regulated transcription of nearly all RNA polymerase II-dependent genes. Mediator functions as a bridge to convey information from gene-specific regulatory proteins to the basal RNA polymerase II transcription machinery. Mediator is recruited to promoters by direct interactions with regulatory proteins and serves as a scaffold for the assembly of a functional preinitiation complex with RNA polymerase II and the general transcription factors. The protein is Putative mediator of RNA polymerase II transcription subunit 9 (med9) of Dictyostelium discoideum (Social amoeba).